Consider the following 241-residue polypeptide: Large ribosomal subunit protein uL30 (241 aa).

Positions 1–25 (MASTLKPETLVKKSKAQQKTAEERA) are disordered.

The protein belongs to the universal ribosomal protein uL30 family.

The polypeptide is Large ribosomal subunit protein uL30 (RPL7) (Debaryomyces hansenii (strain ATCC 36239 / CBS 767 / BCRC 21394 / JCM 1990 / NBRC 0083 / IGC 2968) (Yeast)).